The chain runs to 65 residues: Protein translocase subunit SecE (65 aa).

A helical membrane pass occupies residues 44–64 (LVMAVVGLIAYIVQLTTSLII).

The protein belongs to the SecE/SEC61-gamma family. As to quaternary structure, component of the Sec protein translocase complex. Heterotrimer consisting of SecY (alpha), SecG (beta) and SecE (gamma) subunits. The heterotrimers can form oligomers, although 1 heterotrimer is thought to be able to translocate proteins. Interacts with the ribosome. May interact with SecDF, and other proteins may be involved.

The protein resides in the cell membrane. Its function is as follows. Essential subunit of the Sec protein translocation channel SecYEG. Clamps together the 2 halves of SecY. May contact the channel plug during translocation. The protein is Protein translocase subunit SecE of Sulfolobus acidocaldarius (strain ATCC 33909 / DSM 639 / JCM 8929 / NBRC 15157 / NCIMB 11770).